The chain runs to 207 residues: Guanylate kinase (207 aa).

In terms of domain architecture, Guanylate kinase-like spans 10–187 (GFFIVLSAAS…AVERLQVIYQ (178 aa)). 17–24 (AASGTGKT) contributes to the ATP binding site.

It belongs to the guanylate kinase family.

The protein resides in the cytoplasm. The enzyme catalyses GMP + ATP = GDP + ADP. In terms of biological role, essential for recycling GMP and indirectly, cGMP. The polypeptide is Guanylate kinase (Syntrophus aciditrophicus (strain SB)).